Here is a 962-residue protein sequence, read N- to C-terminus: MPKLSRRSRILLILGGVVLIALIAGSRLLGTYVDWLWFGEVGRRQVFATQVFSRLGLGVAAGAFVGVVLLLNLWIAYRSRPVFVPVSGPDDPLARYRTVATERSRLFGWGIPIVIAVIAGLTAQSDWQTLQLFLHSVPFGQVDPEFGNDISFYTFQLPFWRFLLSWSFVAITVGFIGALVTHYIFGGIRLAGRSGQVAAPARIQLSVLAGLFVLLKAVDYFLDRYDLLLSDRNSLFTGATYTDLNALMPVKLILMIIAVFCALAFFAAIFLRNLQIPAIATVLLVLSSILVGSVWPALLEQFSVRPNANQREALSIERNLAATRSAFGIGADKVTIKDYPGKTALTPGEVADDEGTIPNIRLLDPNVLSDTFTQLTQQYNFYGFNEKLDVDRYREPNGQLRDYLVALREIDTDGLAQNQQSWINRHMVYTHGNGFIAAPADRVDSTFQEGATQGGYPVFQISDVANGGKGAIPVDNPRVYYGELLNQNDYAIVGGNPGEAPREYDTDRSAYTYAGKGGVPLGSFFNRLVFAGYYGERNFLFNTAIGSDSKIMYERNPRDRVQKVAPWLKLDGDPYPAVVDGKVKWIIDGYTTLDNYPYSQQTQFGQATTDTLTGVERQPNQPINYIRNSVKATVDAYDGSVDLYAVDEKDPVLKAWQGVFPGVVKPAKEISPQLQEHFRYPEDLFKVQRQLLTQYHVTNPGDFFSNRTFWEVPPDPTSSGQGGSNQGNQQPPYYVLAQIEGQNQPTFQLTSALTALKRQNLAAWVSASSDPRDYGKLTVLRLPTDTQTPGPNQVQNQMESTPEVTENRTLFNNPQVTAIFGNLLTLPVAGGLLYVEPIYIQRNETESYPQLARVLVSFGGKVGFSETLAGALEQVFGPGAGQTAGDEPPPGQDSNQPPGQQPPTQQPPAGSPEMTKAVADIRTALESVRSAQQSGNFGRLGAAYQQLDEALKRFEQLGGTGG.

The next 7 membrane-spanning stretches (helical) occupy residues Ile-10–Gly-30, Leu-55–Ile-75, Leu-106–Asp-126, Phe-168–Ile-188, Ile-203–Asp-223, Val-250–Phe-270, and Ile-279–Leu-299. 2 disordered regions span residues Arg-707–Gln-730 and Phe-876–Lys-916. Over residues Gly-899 to Gly-910 the composition is skewed to pro residues.

It belongs to the UPF0182 family.

It is found in the cell membrane. The polypeptide is UPF0182 protein SACE_1102 (Saccharopolyspora erythraea (strain ATCC 11635 / DSM 40517 / JCM 4748 / NBRC 13426 / NCIMB 8594 / NRRL 2338)).